The chain runs to 471 residues: Ribosomal protein uS12 methylthiotransferase RimO (471 aa).

The MTTase N-terminal domain occupies 23 to 138 (PKIGFVSLGC…VMDAVHVHVP (116 aa)). [4Fe-4S] cluster contacts are provided by cysteine 32, cysteine 68, cysteine 97, cysteine 169, cysteine 173, and cysteine 176. A Radical SAM core domain is found at 155–396 (LTPRHYAYLK…MAVAEAVSAE (242 aa)). The TRAM domain maps to 399–471 (RERVGAEMQV…QGHDLVGQPL (73 aa)).

The protein belongs to the methylthiotransferase family. RimO subfamily. Requires [4Fe-4S] cluster as cofactor.

It is found in the cytoplasm. The enzyme catalyses L-aspartate(89)-[ribosomal protein uS12]-hydrogen + (sulfur carrier)-SH + AH2 + 2 S-adenosyl-L-methionine = 3-methylsulfanyl-L-aspartate(89)-[ribosomal protein uS12]-hydrogen + (sulfur carrier)-H + 5'-deoxyadenosine + L-methionine + A + S-adenosyl-L-homocysteine + 2 H(+). Its function is as follows. Catalyzes the methylthiolation of an aspartic acid residue of ribosomal protein uS12. The sequence is that of Ribosomal protein uS12 methylthiotransferase RimO from Methylibium petroleiphilum (strain ATCC BAA-1232 / LMG 22953 / PM1).